A 747-amino-acid polypeptide reads, in one-letter code: DNA repair and recombination protein RAD54-like (747 aa).

Positions 1–42 are disordered; it reads MRRSLAPSQLARRKPEDRSSDDEDWQPGTVTPKKRKSSSETQ. The tract at residues 2-9 is required for chromatin remodeling, strand pairing activities and coupling of ATPase activity; that stretch reads RRSLAPSQ. Ser38 is modified (phosphoserine). A Helicase ATP-binding domain is found at 170–345; the sequence is SRRIPGSHGC…FSLVHFVNSG (176 aa). ATP is bound at residue 183 to 190; it reads DEMGLGKT. The DEGH box motif lies at 296–299; the sequence is DEGH. The Helicase C-terminal domain occupies 500–653; sequence VLDYILAVTR…CVVDEEQDVE (154 aa). Lys515 carries the post-translational modification N6-acetyllysine. Position 572 is a phosphoserine; by NEK1 (Ser572).

Belongs to the SNF2/RAD54 helicase family. As to quaternary structure, homohexamer. Interacts (via N-terminus) with RAD51. Interacts with NAP1L1. Interacts with BRD9; this interaction orchestrates RAD51-RAD54 complex formation. In terms of processing, acetylated. Acetylation promotes interaction with BRD9, and subsequently with RAD54, which is essential for homologous recombination (HR). Post-translationally, phosphorylated. Phosphorylation at Ser-572 by NEK1 specifically in G2 phase allows efficient removal of RAD51 filaments from DNA. In terms of tissue distribution, hardly detectable in most tissues. Dramatically increased in thymus, spleen and testis.

The protein resides in the nucleus. The catalysed reaction is ATP + H2O = ADP + phosphate + H(+). Its function is as follows. Plays an essential role in homologous recombination (HR) which is a major pathway for repairing DNA double-strand breaks (DSBs), single-stranded DNA (ssDNA) gaps, and stalled or collapsed replication forks. Acts as a molecular motor during the homology search and guides RAD51 ssDNA along a donor dsDNA thereby changing the homology search from the diffusion-based mechanism to a motor-guided mechanism. Plays also an essential role in RAD51-mediated synaptic complex formation which consists of three strands encased in a protein filament formed once homology is recognized. Once DNA strand exchange occured, dissociates RAD51 from nucleoprotein filaments formed on dsDNA. Deficiency also resulted in an increased frequency of end-to-end chromosome fusions involving telomeres compared to the controls, suggesting a putative role in telomere capping. Non-homologous end joining (NHEJ) and homologous recombination (HR) represent the two major pathways of DNA double-strand break (DSB) repair in eukaryotic cells. LIG4 and RAD54L cooperate to support cellular proliferation, repair spontaneous DSBs, and prevent chromosome and single chromatid aberrations. This Mus musculus (Mouse) protein is DNA repair and recombination protein RAD54-like (Rad54l).